The sequence spans 641 residues: UPF0329 protein ECU11_0030 (641 aa).

Positions 358-387 (RQRKREEETERSVKELVGDEEKAKSKEEKA) are enriched in basic and acidic residues. Residues 358–444 (RQRKREEETE…KGGKKKSKGG (87 aa)) form a disordered region. Residues 435–444 (KGGKKKSKGG) are compositionally biased toward basic residues.

The protein belongs to the UPF0329 family.

The polypeptide is UPF0329 protein ECU11_0030 (Encephalitozoon cuniculi (strain GB-M1) (Microsporidian parasite)).